A 146-amino-acid polypeptide reads, in one-letter code: Angiogenin (146 aa).

An N-terminal signal peptide occupies residues 1-24 (MVMGLGLFLLVFMLGLGLTPPTLA). A Pyrrolidone carboxylic acid modification is found at Q25. H37 (proton acceptor) is an active-site residue. Residue R45 participates in tRNA binding. 3 cysteine pairs are disulfide-bonded: C50-C105, C63-C116, and C81-C131. A Nucleolar localization signal motif is present at residues 55 to 59 (RRRHL). TRNA-binding residues include C105 and I127. H138 functions as the Proton donor in the catalytic mechanism.

The protein belongs to the pancreatic ribonuclease family. Homodimer. Interacts with RNH1; inhibiting ANG ribonuclease activity. Interacts with PCNA.

The protein localises to the secreted. It is found in the nucleus. The protein resides in the nucleolus. Its subcellular location is the cytoplasm. It localises to the stress granule. Has weak tRNA ribonuclease activity by itself due to partial autoinhibition by its C-terminus, which folds into a short alpha-helix that partially occludes the substrate-binding site. In absence of stress, the ribonuclease activity is inhibited by RNH1 in the cytoplasm. In response to stress, dissociates from RNH1 in the cytoplasm and associates with cytoplasmic ribosomes with vacant A-sites: ribosomes directly activate the tRNA ribonuclease activity of ANG by refolding the C-terminal alpha-helix. In response to stress, the angiogenic activity of ANG is inhibited by RNH1 in the nucleus. Functionally, secreted ribonuclease that can either promote or restrict cell proliferation of target cells, depending on the context. Endocytosed in target cells via its receptor PLXNB2 and translocates to the cytoplasm or nucleus. Under stress conditions, localizes to the cytoplasm and promotes the assembly of stress granules (SGs): specifically cleaves a subset of tRNAs within anticodon loops to produce tRNA-derived stress-induced fragments (tiRNAs), resulting in translation repression and inhibition of cell proliferation. tiRNas also prevent formation of apoptosome, thereby promoting cell survival. Preferentially cleaves RNAs between a pyrimidine and an adenosine residue, suggesting that it cleaves the anticodon loop of tRNA(Ala) (32-UUAGCAU-38) after positions 33 and 36. Cleaves a subset of tRNAs, including tRNA(Ala), tRNA(Glu), tRNA(Gly), tRNA(Lys), tRNA(Val), tRNA(His), tRNA(Asp) and tRNA(Sec). Under growth conditions and in differentiated cells, translocates to the nucleus and stimulates ribosomal RNA (rRNA) transcription, including that containing the initiation site sequences of 45S rRNA, thereby promoting cell growth and proliferation. Angiogenin induces vascularization of normal and malignant tissues via its ability to promote rRNA transcription. Involved in hematopoietic stem and progenitor cell (HSPC) growth and survival by promoting rRNA transcription in growth conditions and inhibiting translation in response to stress, respectively. Mediates the crosstalk between myeloid and intestinal epithelial cells to protect the intestinal epithelial barrier integrity: secreted by myeloid cells and promotes intestinal epithelial cells proliferation and survival. Also mediates osteoclast-endothelial cell crosstalk in growing bone: produced by osteoclasts and protects the neighboring vascular cells against senescence by promoting rRNA transcription. The chain is Angiogenin (ANG) from Chlorocebus aethiops (Green monkey).